The following is a 311-amino-acid chain: Aspartate carbamoyltransferase catalytic subunit (311 aa).

Carbamoyl phosphate contacts are provided by Arg55 and Thr56. Lys85 lines the L-aspartate pocket. Residues Arg106, His135, and Gln138 each coordinate carbamoyl phosphate. 2 residues coordinate L-aspartate: Arg168 and Arg230. The carbamoyl phosphate site is built by Leu268 and Pro269.

This sequence belongs to the aspartate/ornithine carbamoyltransferase superfamily. ATCase family. Heterododecamer (2C3:3R2) of six catalytic PyrB chains organized as two trimers (C3), and six regulatory PyrI chains organized as three dimers (R2).

The enzyme catalyses carbamoyl phosphate + L-aspartate = N-carbamoyl-L-aspartate + phosphate + H(+). It functions in the pathway pyrimidine metabolism; UMP biosynthesis via de novo pathway; (S)-dihydroorotate from bicarbonate: step 2/3. Its function is as follows. Catalyzes the condensation of carbamoyl phosphate and aspartate to form carbamoyl aspartate and inorganic phosphate, the committed step in the de novo pyrimidine nucleotide biosynthesis pathway. In Escherichia fergusonii (strain ATCC 35469 / DSM 13698 / CCUG 18766 / IAM 14443 / JCM 21226 / LMG 7866 / NBRC 102419 / NCTC 12128 / CDC 0568-73), this protein is Aspartate carbamoyltransferase catalytic subunit.